Reading from the N-terminus, the 328-residue chain is Malate dehydrogenase (328 aa).

Position 11 to 17 (11 to 17 (GAAGQIG)) interacts with NAD(+). 2 residues coordinate substrate: Arg92 and Arg98. NAD(+)-binding positions include Asn105, Gln112, and 129-131 (VGN). Substrate is bound by residues Asn131 and Arg162. The active-site Proton acceptor is the His187.

This sequence belongs to the LDH/MDH superfamily. MDH type 2 family.

The catalysed reaction is (S)-malate + NAD(+) = oxaloacetate + NADH + H(+). Catalyzes the reversible oxidation of malate to oxaloacetate. In Coxiella burnetii (strain CbuG_Q212) (Coxiella burnetii (strain Q212)), this protein is Malate dehydrogenase.